A 212-amino-acid chain; its full sequence is Leucyl/phenylalanyl-tRNA--protein transferase (212 aa).

Belongs to the L/F-transferase family.

The protein localises to the cytoplasm. It carries out the reaction N-terminal L-lysyl-[protein] + L-leucyl-tRNA(Leu) = N-terminal L-leucyl-L-lysyl-[protein] + tRNA(Leu) + H(+). The catalysed reaction is N-terminal L-arginyl-[protein] + L-leucyl-tRNA(Leu) = N-terminal L-leucyl-L-arginyl-[protein] + tRNA(Leu) + H(+). It catalyses the reaction L-phenylalanyl-tRNA(Phe) + an N-terminal L-alpha-aminoacyl-[protein] = an N-terminal L-phenylalanyl-L-alpha-aminoacyl-[protein] + tRNA(Phe). Functions in the N-end rule pathway of protein degradation where it conjugates Leu, Phe and, less efficiently, Met from aminoacyl-tRNAs to the N-termini of proteins containing an N-terminal arginine or lysine. The polypeptide is Leucyl/phenylalanyl-tRNA--protein transferase (Flavobacterium johnsoniae (strain ATCC 17061 / DSM 2064 / JCM 8514 / BCRC 14874 / CCUG 350202 / NBRC 14942 / NCIMB 11054 / UW101) (Cytophaga johnsonae)).